A 378-amino-acid chain; its full sequence is 3-ketosteroid-9-alpha-monooxygenase, oxygenase component (378 aa).

The Rieske domain occupies 26–128 (WHCIGLAKDF…TMERNGVLFV (103 aa)). 4 residues coordinate [2Fe-2S] cluster: C67, H69, C86, and H89. 4 residues coordinate Fe cation: N175, H181, H186, and D305.

In terms of assembly, homotrimer. The two-component system 3-ketosteroid-9-alpha-monooxygenase is composed of an oxygenase component KshA and a reductase component KshB. The cofactor is [2Fe-2S] cluster. Fe cation serves as cofactor.

It catalyses the reaction androsta-1,4-diene-3,17-dione + 2 reduced [2Fe-2S]-[ferredoxin] + O2 + 2 H(+) = 9alpha-hydroxyandrosta-1,4-diene-3,17-dione + 2 oxidized [2Fe-2S]-[ferredoxin] + H2O. With respect to regulation, KSH activity is completely inhibited by zinc ions. KshA is specifically inhibited by Fe(3+), Co(2+), Zn(2+) and Ni(2+) ions. Its function is as follows. In vitro, catalyzes the introduction of a 9alpha-hydroxyl moiety into the ring B of 3-ketosteroid substrates such as 1,4-androstadiene-3,17-dione (ADD), 4-androstene-3,17-dione (AD), 4-androstene-17beta-ol-3-one (testosterone), 4-pregnene-3,20-dione (progesterone), 19-nor-4-androstene-3,17-dione (nordion), 1-(5alpha)-androstene-3,17-dione, 5alpha-androstane-3,17-dione and 5beta-androstane-3,17-dione. KSH has the highest activity with 3-keto-delta4 steroid substrates. The polypeptide is 3-ketosteroid-9-alpha-monooxygenase, oxygenase component (Rhodococcus rhodochrous).